The following is a 196-amino-acid chain: Segregation and condensation protein B (196 aa).

This sequence belongs to the ScpB family. In terms of assembly, homodimer. Homodimerization may be required to stabilize the binding of ScpA to the Smc head domains. Component of a cohesin-like complex composed of ScpA, ScpB and the Smc homodimer, in which ScpA and ScpB bind to the head domain of Smc. The presence of the three proteins is required for the association of the complex with DNA.

The protein resides in the cytoplasm. Participates in chromosomal partition during cell division. May act via the formation of a condensin-like complex containing Smc and ScpA that pull DNA away from mid-cell into both cell halves. In Pediococcus pentosaceus (strain ATCC 25745 / CCUG 21536 / LMG 10740 / 183-1w), this protein is Segregation and condensation protein B.